Reading from the N-terminus, the 265-residue chain is tRNA pseudouridine synthase A (265 aa).

The active-site Nucleophile is Asp-53. Tyr-111 contacts substrate.

The protein belongs to the tRNA pseudouridine synthase TruA family. Homodimer.

It catalyses the reaction uridine(38/39/40) in tRNA = pseudouridine(38/39/40) in tRNA. In terms of biological role, formation of pseudouridine at positions 38, 39 and 40 in the anticodon stem and loop of transfer RNAs. This Acinetobacter baumannii (strain AB307-0294) protein is tRNA pseudouridine synthase A.